We begin with the raw amino-acid sequence, 71 residues long: Disintegrin simusmin (71 aa).

The 71-residue stretch at 1–71 (AGEECDCGSP…SADCPRNPFH (71 aa)) folds into the Disintegrin domain. Intrachain disulfides connect C5-C20, C7-C15, C14-C37, C28-C34, C33-C58, and C46-C65. The Cell attachment site signature appears at 50-52 (RGD).

The protein belongs to the venom metalloproteinase (M12B) family. P-II subfamily. P-IIa sub-subfamily. Monomer. In terms of tissue distribution, expressed by the venom gland.

The protein localises to the secreted. Its function is as follows. Inhibits ADP- (IC(50)=56 nM) and collagen-induced (IC(50)=49 nM) aggregation of human platelets. In vitro, inhibits adhesion of endothelial cells to vitronectin, type-I collagen and, to a lower degree, fibronectin and laminin. The chain is Disintegrin simusmin from Crotalus simus (Central American rattlesnake).